A 186-amino-acid chain; its full sequence is UPF0340 protein SEQ_1951 (186 aa).

It belongs to the UPF0340 family.

This is UPF0340 protein SEQ_1951 from Streptococcus equi subsp. equi (strain 4047).